The chain runs to 115 residues: Large ribosomal subunit protein bL19 (115 aa).

It belongs to the bacterial ribosomal protein bL19 family.

This protein is located at the 30S-50S ribosomal subunit interface and may play a role in the structure and function of the aminoacyl-tRNA binding site. The chain is Large ribosomal subunit protein bL19 from Lacticaseibacillus casei (strain BL23) (Lactobacillus casei).